Here is a 377-residue protein sequence, read N- to C-terminus: Cilia- and flagella-associated protein 263 (377 aa).

Coiled-coil stretches lie at residues 95 to 243 and 280 to 354; these read LTAD…NQEL and LRKE…SLKG.

Belongs to the CFAP263 family. As to quaternary structure, forms a complex with CFAP184; the interaction is required for functional activity in cilia. Interacts with HAP1 and PCM1.

The protein resides in the cytoplasm. The protein localises to the cytoskeleton. It localises to the microtubule organizing center. Its subcellular location is the centrosome. It is found in the centriolar satellite. The protein resides in the cell projection. The protein localises to the cilium. Functionally, component of centriolar satellites contributing to primary cilium formation. In complex with CFAP263, acts as a regulator of ciliary beating that connects radial spoke 3 (RS3) to the inner dynein arm (IDA) and the nexin-dynein regulatory complex (N-DRC). The complex is positioned parallel to N-DRC and forms a connection between the arch at the base of RS3, the IDA tail and N-DRC. The chain is Cilia- and flagella-associated protein 263 from Homo sapiens (Human).